Consider the following 855-residue polypeptide: Valine--tRNA ligase (855 aa).

Positions proline 44–asparagine 54 match the 'HIGH' region motif. A 'KMSKS' region motif is present at residues lysine 522–serine 526. An ATP-binding site is contributed by lysine 525.

The protein belongs to the class-I aminoacyl-tRNA synthetase family. ValS type 2 subfamily.

The protein resides in the cytoplasm. It carries out the reaction tRNA(Val) + L-valine + ATP = L-valyl-tRNA(Val) + AMP + diphosphate. In terms of biological role, catalyzes the attachment of valine to tRNA(Val). As ValRS can inadvertently accommodate and process structurally similar amino acids such as threonine, to avoid such errors, it has a 'posttransfer' editing activity that hydrolyzes mischarged Thr-tRNA(Val) in a tRNA-dependent manner. In Methanothrix thermoacetophila (strain DSM 6194 / JCM 14653 / NBRC 101360 / PT) (Methanosaeta thermophila), this protein is Valine--tRNA ligase.